A 282-amino-acid chain; its full sequence is Transcription factor BC1 (282 aa).

Positions 34-123 are disordered; the sequence is TTAPAIPEDA…ATDSHSLAER (90 aa). A compositionally biased stretch (polar residues) spans 45 to 55; the sequence is METSSVVLDTS. The segment covering 75–84 has biased composition (basic and acidic residues); sequence HSKEAKENGR. Positions 109–116 match the Nuclear localization signal motif; the sequence is ARRGQATD. A basic motif; degenerate region spans residues 113–126; that stretch reads QATDSHSLAERVRR. Positions 113-163 constitute a bHLH domain; that stretch reads QATDSHSLAERVRRERISERMRMLQALVPGCDKVTGKALILDEIINYVQSL. Residues 127–163 are helix-loop-helix motif; that stretch reads ERISERMRMLQALVPGCDKVTGKALILDEIINYVQSL. The interval 219 to 251 is disordered; that stretch reads PAQSHAIMDTSNTSPTPYTLQVQGGSNNNSLSQ.

Belongs to the bHLH protein family. As to quaternary structure, homodimer. Component of a nuclear cell elongation controlling complex made of ILI5/BUL1, LO9-177 and BC1. Interacts with ILI5/BUL1 only in the presence of LO9-177. Interacts with IBH1. Binds to LO9-177 in the nucleus. Interacts with BCL1. In terms of tissue distribution, preferentially present in anthers and leaves lamina joints. Expressed in seedlings, leaves sheaths, collars and panicles.

Its subcellular location is the nucleus. Its function is as follows. Transcription activator that contributes, together with LO9-177 and ILI5/BUL1, to the promotion of leaf inclination and grain size by modulating cell elongation. Involved in the RLI1-dependent modulation of leaf inclination by promoting lamina joint cell elongation, especially in response to phosphate (Pi) availability. This chain is Transcription factor BC1, found in Oryza sativa subsp. japonica (Rice).